The primary structure comprises 86 residues: Small ribosomal subunit protein bS20 (86 aa).

Positions 1–11 (MANIKQQKKRN) are enriched in basic residues. The segment at 1-20 (MANIKQQKKRNKTNEKRRLQ) is disordered.

The protein belongs to the bacterial ribosomal protein bS20 family.

In terms of biological role, binds directly to 16S ribosomal RNA. This Aster yellows witches'-broom phytoplasma (strain AYWB) protein is Small ribosomal subunit protein bS20.